We begin with the raw amino-acid sequence, 501 residues long: ATP synthase subunit alpha (501 aa).

Residue 169–176 coordinates ATP; the sequence is GDRQTGKT.

This sequence belongs to the ATPase alpha/beta chains family. In terms of assembly, F-type ATPases have 2 components, CF(1) - the catalytic core - and CF(0) - the membrane proton channel. CF(1) has five subunits: alpha(3), beta(3), gamma(1), delta(1), epsilon(1). CF(0) has three main subunits: a(1), b(2) and c(9-12). The alpha and beta chains form an alternating ring which encloses part of the gamma chain. CF(1) is attached to CF(0) by a central stalk formed by the gamma and epsilon chains, while a peripheral stalk is formed by the delta and b chains.

The protein resides in the cell membrane. It catalyses the reaction ATP + H2O + 4 H(+)(in) = ADP + phosphate + 5 H(+)(out). Its function is as follows. Produces ATP from ADP in the presence of a proton gradient across the membrane. The alpha chain is a regulatory subunit. The polypeptide is ATP synthase subunit alpha (Streptococcus mutans serotype c (strain ATCC 700610 / UA159)).